Consider the following 918-residue polypeptide: Probable lipoxygenase 6 (918 aa).

The tract at residues alanine 56–glutamate 76 is disordered. The 129-residue stretch at glutamine 90–serine 218 folds into the PLAT domain. Residues proline 221 to isoleucine 918 form the Lipoxygenase domain. Positions 573, 578, 765, 769, and 918 each coordinate Fe cation.

Belongs to the lipoxygenase family. It depends on Fe cation as a cofactor.

The catalysed reaction is (9Z,12Z)-octadecadienoate + O2 = (13S)-hydroperoxy-(9Z,11E)-octadecadienoate. It carries out the reaction (9Z,12Z,15Z)-octadecatrienoate + O2 = (13S)-hydroperoxy-(9Z,11E,15Z)-octadecatrienoate. Its pathway is lipid metabolism; oxylipin biosynthesis. In terms of biological role, plant lipoxygenase may be involved in a number of diverse aspects of plant physiology including growth and development, pest resistance, and senescence or responses to wounding. Catalyzes the hydroperoxidation of lipids containing a cis,cis-1,4-pentadiene structure. The protein is Probable lipoxygenase 6 of Oryza sativa subsp. japonica (Rice).